The chain runs to 275 residues: Diaminopimelate epimerase (275 aa).

Asn13, Gln46, and Asn65 together coordinate substrate. The active-site Proton donor is Cys74. Substrate-binding positions include 75 to 76 (GN), Asn158, Asn191, and 209 to 210 (ER). Cys218 functions as the Proton acceptor in the catalytic mechanism. 219–220 (GT) is a binding site for substrate.

Belongs to the diaminopimelate epimerase family. Homodimer.

Its subcellular location is the cytoplasm. The enzyme catalyses (2S,6S)-2,6-diaminopimelate = meso-2,6-diaminopimelate. It functions in the pathway amino-acid biosynthesis; L-lysine biosynthesis via DAP pathway; DL-2,6-diaminopimelate from LL-2,6-diaminopimelate: step 1/1. In terms of biological role, catalyzes the stereoinversion of LL-2,6-diaminopimelate (L,L-DAP) to meso-diaminopimelate (meso-DAP), a precursor of L-lysine and an essential component of the bacterial peptidoglycan. This chain is Diaminopimelate epimerase, found in Nitrosomonas europaea (strain ATCC 19718 / CIP 103999 / KCTC 2705 / NBRC 14298).